We begin with the raw amino-acid sequence, 304 residues long: Malate dehydrogenase (304 aa).

Residues 8 to 14 and Asp34 each bind NAD(+); that span reads GAAGTVG. The substrate site is built by Arg83 and Arg89. NAD(+)-binding positions include Asn96 and 119–121; that span reads TSN. Residues Asn121 and Arg152 each coordinate substrate. His176 (proton acceptor) is an active-site residue.

It belongs to the LDH/MDH superfamily. In terms of assembly, homotetramer; arranged as a dimer of dimers.

The protein localises to the cytoplasm. It carries out the reaction (S)-malate + NAD(+) = oxaloacetate + NADH + H(+). In terms of biological role, catalyzes the reversible oxidation of malate to oxaloacetate. This Haloarcula marismortui (strain ATCC 43049 / DSM 3752 / JCM 8966 / VKM B-1809) (Halobacterium marismortui) protein is Malate dehydrogenase (mdh).